The chain runs to 518 residues: MKKLKINYLFIGILALLLAVALWPSIPWFGKADNRIAAIQARGELRVSTIHTPLTYNEINGKPFGLDYELAKQFADYLGVKLKVTVRQNISQLFDDLDNGNADLLAAGLVYNSERVKNYQPGPTYYSVSQQLVYKVGQYRPRTLGNLTAEQLTVAPGHVVVNDLQTLKETKFPELSWKVDDKKGSAELMEDVIEGKLDYTIADSVAISLFQRVHPELAVALDITDEQPVTWFSPLDGDNTLSAALLDFFNEMNEDGTLARIEEKYLGHGDDFDYVDTRTFLRAVDAVLPQLKPLFEKYAEEIDWRLLAAIAYQESHWDAQATSPTGVRGMMMLTKNTAQSLGITDRTDAEQSISGGVRYLQDMMSKVPESVPENERIWFALAAYNMGYAHMLDARALTAKTKGNPDSWADVKQRLPLLSQKPYYSKLTYGYARGHEAYAYVENIRKYQISLVGYLQEKEKQATEAAMQLAQDYPAVSPTELGKEKFPFLSFLSQSSSNYLTHSPSLLFSRKGSEEKQN.

The N-terminal stretch at 1–21 (MKKLKINYLFIGILALLLAVA) is a signal peptide. Positions 22 to 269 (LWPSIPWFGK…RIEEKYLGHG (248 aa)) are non-LT domain. An LT domain region spans residues 270–518 (DDFDYVDTRT…SRKGSEEKQN (249 aa)). The active site involves glutamate 314.

This sequence in the N-terminal section; belongs to the bacterial solute-binding protein 3 family. In the C-terminal section; belongs to the transglycosylase Slt family.

It localises to the cell outer membrane. It catalyses the reaction Exolytic cleavage of the (1-&gt;4)-beta-glycosidic linkage between N-acetylmuramic acid (MurNAc) and N-acetylglucosamine (GlcNAc) residues in peptidoglycan, from either the reducing or the non-reducing ends of the peptidoglycan chains, with concomitant formation of a 1,6-anhydrobond in the MurNAc residue.. Functionally, murein-degrading enzyme that degrades murein glycan strands and insoluble, high-molecular weight murein sacculi, with the concomitant formation of a 1,6-anhydromuramoyl product. Lytic transglycosylases (LTs) play an integral role in the metabolism of the peptidoglycan (PG) sacculus. Their lytic action creates space within the PG sacculus to allow for its expansion as well as for the insertion of various structures such as secretion systems and flagella. The protein is Membrane-bound lytic murein transglycosylase F of Escherichia coli (strain ATCC 8739 / DSM 1576 / NBRC 3972 / NCIMB 8545 / WDCM 00012 / Crooks).